We begin with the raw amino-acid sequence, 150 residues long: Large ribosomal subunit protein bL9 (150 aa).

It belongs to the bacterial ribosomal protein bL9 family.

Functionally, binds to the 23S rRNA. This chain is Large ribosomal subunit protein bL9, found in Baumannia cicadellinicola subsp. Homalodisca coagulata.